Reading from the N-terminus, the 343-residue chain is Putative KilA-N domain-containing protein R904 (343 aa).

The region spanning 51 to 157 (EFSWGNYLNL…IKASVIINDY (107 aa)) is the KilA-N domain. Residues 159 to 279 (AKQMFKEHEK…NAVKEYKELY (121 aa)) are a coiled coil.

The sequence is that of Putative KilA-N domain-containing protein R904 from Acanthamoeba polyphaga mimivirus (APMV).